Consider the following 283-residue polypeptide: E3 ubiquitin-protein ligase SGR9, amyloplastic (283 aa).

Residues 1–32 constitute an amyloplast transit peptide; the sequence is MEDENTTIIMASLSALSPSHLTNLTHSILSIS. The RING-type; atypical zinc finger occupies 214-255; the sequence is CVICKEEMSEGRDVCEMPCQHFFHWKCILPWLSKKNTCPFCR.

Post-translationally, auto-ubiquitinated as part of the enzymatic reaction. Expressed in seedlings, hypocotyls, roots and stems. Present especially in hypocotyl and inflorescence endodermis, as well as in root cap columella, tissues that act as statocytes.

The protein resides in the plastid. The protein localises to the amyloplast. It catalyses the reaction S-ubiquitinyl-[E2 ubiquitin-conjugating enzyme]-L-cysteine + [acceptor protein]-L-lysine = [E2 ubiquitin-conjugating enzyme]-L-cysteine + N(6)-ubiquitinyl-[acceptor protein]-L-lysine.. Its pathway is protein modification; protein ubiquitination. Functionally, E3 ubiquitin-protein ligase which accepts ubiquitin from an E2 ubiquitin-conjugating enzyme in the form of a thioester and then directly transfers the ubiquitin to targeted substrates. Modulates amyloplast dynamics and sedimentation in statocytes during inflorescence, hypocotyl and root gravitropism, probably by regulating amyloplast interaction with actin filaments (AFs) in endodermal cells. The chain is E3 ubiquitin-protein ligase SGR9, amyloplastic (SGR9) from Arabidopsis thaliana (Mouse-ear cress).